We begin with the raw amino-acid sequence, 127 residues long: Chorismate mutase AroH (127 aa).

A Chorismate mutase aroH-type domain is found at 3-121 (IRGIRGATTV…VVVLRPDLSL (119 aa)). Residues Arg7, 74–78 (TCMQE), Arg90, and Tyr108 each bind prephenate.

In terms of assembly, homotrimer.

The protein resides in the cytoplasm. It carries out the reaction chorismate = prephenate. It participates in metabolic intermediate biosynthesis; prephenate biosynthesis; prephenate from chorismate: step 1/1. In terms of biological role, catalyzes the Claisen rearrangement of chorismate to prephenate. Probably involved in the aromatic amino acid biosynthesis. This chain is Chorismate mutase AroH, found in Bacillus subtilis (strain 168).